We begin with the raw amino-acid sequence, 334 residues long: Geminin coiled-coil domain-containing protein 1 (334 aa).

Residues 82–119 adopt a coiled-coil conformation; that stretch reads SQLYRNKQLQDTLVQKEEELARLHEENNHLRQYLNSAL. Residues 143 to 167 form a disordered region; it reads FRKGKRKSKEQRYSPAEIPHPKNAK.

It belongs to the GEMC1 family. Post-translationally, highly phosphorylated by CDK2; stimulates initiation of DNA replication.

Its subcellular location is the nucleus. Functionally, regulator of DNA replication. Promotes initiation of chromosomal DNA replication by mediating TOPBP1- and CDK2-dependent recruitment of CDC45L onto replication origins. The polypeptide is Geminin coiled-coil domain-containing protein 1 (GMNC) (Homo sapiens (Human)).